A 427-amino-acid chain; its full sequence is Adenylosuccinate synthetase (427 aa).

GTP is bound by residues G12 to K18 and G40 to T42. Catalysis depends on D13, which acts as the Proton acceptor. Residues D13 and G40 each contribute to the Mg(2+) site. IMP contacts are provided by residues D13–K16, N38–H41, T128, R142, Q223, T238, and R302. H41 acts as the Proton donor in catalysis. Residue T298 to R304 participates in substrate binding. GTP contacts are provided by residues R304, K330–D332, and G412–G414.

Belongs to the adenylosuccinate synthetase family. As to quaternary structure, homodimer. It depends on Mg(2+) as a cofactor.

It is found in the cytoplasm. The enzyme catalyses IMP + L-aspartate + GTP = N(6)-(1,2-dicarboxyethyl)-AMP + GDP + phosphate + 2 H(+). It functions in the pathway purine metabolism; AMP biosynthesis via de novo pathway; AMP from IMP: step 1/2. In terms of biological role, plays an important role in the de novo pathway of purine nucleotide biosynthesis. Catalyzes the first committed step in the biosynthesis of AMP from IMP. The sequence is that of Adenylosuccinate synthetase from Thermobifida fusca (strain YX).